Here is a 341-residue protein sequence, read N- to C-terminus: tRNA N6-adenosine threonylcarbamoyltransferase (341 aa).

Fe cation contacts are provided by H112 and H116. Substrate-binding positions include 134 to 138, D167, G180, and N279; that span reads LASGG. D307 provides a ligand contact to Fe cation.

The protein belongs to the KAE1 / TsaD family. Requires Fe(2+) as cofactor.

Its subcellular location is the cytoplasm. It carries out the reaction L-threonylcarbamoyladenylate + adenosine(37) in tRNA = N(6)-L-threonylcarbamoyladenosine(37) in tRNA + AMP + H(+). Functionally, required for the formation of a threonylcarbamoyl group on adenosine at position 37 (t(6)A37) in tRNAs that read codons beginning with adenine. Is involved in the transfer of the threonylcarbamoyl moiety of threonylcarbamoyl-AMP (TC-AMP) to the N6 group of A37, together with TsaE and TsaB. TsaD likely plays a direct catalytic role in this reaction. In Rickettsia bellii (strain OSU 85-389), this protein is tRNA N6-adenosine threonylcarbamoyltransferase.